Reading from the N-terminus, the 96-residue chain is Colicin-K immunity protein (96 aa).

Residues 73-93 (ALFYLLMAIPVGLPSFIYYTL) traverse the membrane as a helical segment.

Its subcellular location is the cell membrane. In terms of biological role, this protein is able to protect a cell, which harbors the plasmid ColK encoding colicin K, against colicin K. This chain is Colicin-K immunity protein (cki), found in Escherichia coli.